A 156-amino-acid chain; its full sequence is ATP synthase subunit b (156 aa).

Residues 7–27 form a helical membrane-spanning segment; that stretch reads LIGQLIAFALFVAFCMKFVWP.

It belongs to the ATPase B chain family. As to quaternary structure, F-type ATPases have 2 components, F(1) - the catalytic core - and F(0) - the membrane proton channel. F(1) has five subunits: alpha(3), beta(3), gamma(1), delta(1), epsilon(1). F(0) has three main subunits: a(1), b(2) and c(10-14). The alpha and beta chains form an alternating ring which encloses part of the gamma chain. F(1) is attached to F(0) by a central stalk formed by the gamma and epsilon chains, while a peripheral stalk is formed by the delta and b chains.

The protein resides in the cell inner membrane. F(1)F(0) ATP synthase produces ATP from ADP in the presence of a proton or sodium gradient. F-type ATPases consist of two structural domains, F(1) containing the extramembraneous catalytic core and F(0) containing the membrane proton channel, linked together by a central stalk and a peripheral stalk. During catalysis, ATP synthesis in the catalytic domain of F(1) is coupled via a rotary mechanism of the central stalk subunits to proton translocation. In terms of biological role, component of the F(0) channel, it forms part of the peripheral stalk, linking F(1) to F(0). In Actinobacillus pleuropneumoniae serotype 5b (strain L20), this protein is ATP synthase subunit b.